Consider the following 540-residue polypeptide: Bifunctional purine biosynthesis protein PurH (540 aa).

The MGS-like domain occupies 1–144 (MKRALISVYD…KNYQDVGVVV (144 aa)). The interval 204-224 (ETAPERPIGADPGPQKPAAPS) is disordered.

The protein belongs to the PurH family.

The enzyme catalyses (6R)-10-formyltetrahydrofolate + 5-amino-1-(5-phospho-beta-D-ribosyl)imidazole-4-carboxamide = 5-formamido-1-(5-phospho-D-ribosyl)imidazole-4-carboxamide + (6S)-5,6,7,8-tetrahydrofolate. It carries out the reaction IMP + H2O = 5-formamido-1-(5-phospho-D-ribosyl)imidazole-4-carboxamide. It functions in the pathway purine metabolism; IMP biosynthesis via de novo pathway; 5-formamido-1-(5-phospho-D-ribosyl)imidazole-4-carboxamide from 5-amino-1-(5-phospho-D-ribosyl)imidazole-4-carboxamide (10-formyl THF route): step 1/1. The protein operates within purine metabolism; IMP biosynthesis via de novo pathway; IMP from 5-formamido-1-(5-phospho-D-ribosyl)imidazole-4-carboxamide: step 1/1. The sequence is that of Bifunctional purine biosynthesis protein PurH from Symbiobacterium thermophilum (strain DSM 24528 / JCM 14929 / IAM 14863 / T).